Here is a 188-residue protein sequence, read N- to C-terminus: Elongation factor P (188 aa).

This sequence belongs to the elongation factor P family.

Its subcellular location is the cytoplasm. The protein operates within protein biosynthesis; polypeptide chain elongation. Functionally, involved in peptide bond synthesis. Stimulates efficient translation and peptide-bond synthesis on native or reconstituted 70S ribosomes in vitro. Probably functions indirectly by altering the affinity of the ribosome for aminoacyl-tRNA, thus increasing their reactivity as acceptors for peptidyl transferase. The protein is Elongation factor P of Anaplasma marginale (strain Florida).